A 280-amino-acid polypeptide reads, in one-letter code: Adenosylcobinamide-GDP ribazoletransferase (280 aa).

A run of 7 helical transmembrane segments spans residues 4-24, 34-54, 58-78, 108-128, 136-156, 197-217, and 254-274; these read YLLA…GITM, IFFY…VAYA, VFPG…ITGF, TLGT…YGSI, IAAF…IAEV, LIGF…IGLI, and ITAL…YLGG.

It belongs to the CobS family. It depends on Mg(2+) as a cofactor.

The protein localises to the cell membrane. It carries out the reaction alpha-ribazole + adenosylcob(III)inamide-GDP = adenosylcob(III)alamin + GMP + H(+). The enzyme catalyses alpha-ribazole 5'-phosphate + adenosylcob(III)inamide-GDP = adenosylcob(III)alamin 5'-phosphate + GMP + H(+). It participates in cofactor biosynthesis; adenosylcobalamin biosynthesis; adenosylcobalamin from cob(II)yrinate a,c-diamide: step 7/7. Functionally, joins adenosylcobinamide-GDP and alpha-ribazole to generate adenosylcobalamin (Ado-cobalamin). Also synthesizes adenosylcobalamin 5'-phosphate from adenosylcobinamide-GDP and alpha-ribazole 5'-phosphate. The polypeptide is Adenosylcobinamide-GDP ribazoletransferase (Methanosarcina mazei (strain ATCC BAA-159 / DSM 3647 / Goe1 / Go1 / JCM 11833 / OCM 88) (Methanosarcina frisia)).